Here is a 166-residue protein sequence, read N- to C-terminus: Endoribonuclease YbeY (166 aa).

Residues His-125, His-129, and His-135 each coordinate Zn(2+).

Belongs to the endoribonuclease YbeY family. It depends on Zn(2+) as a cofactor.

Its subcellular location is the cytoplasm. Functionally, single strand-specific metallo-endoribonuclease involved in late-stage 70S ribosome quality control and in maturation of the 3' terminus of the 16S rRNA. This Alkalilimnicola ehrlichii (strain ATCC BAA-1101 / DSM 17681 / MLHE-1) protein is Endoribonuclease YbeY.